The following is a 211-amino-acid chain: Urease accessory protein UreF (211 aa).

Residues 71 to 93 form a disordered region; that stretch reads DDADRETDARTPAPAARHASRSQ.

This sequence belongs to the UreF family. As to quaternary structure, ureD, UreF and UreG form a complex that acts as a GTP-hydrolysis-dependent molecular chaperone, activating the urease apoprotein by helping to assemble the nickel containing metallocenter of UreC. The UreE protein probably delivers the nickel.

It localises to the cytoplasm. Its function is as follows. Required for maturation of urease via the functional incorporation of the urease nickel metallocenter. This Mycobacterium bovis (strain ATCC BAA-935 / AF2122/97) protein is Urease accessory protein UreF.